The following is a 1138-amino-acid chain: Phosphatidylserine decarboxylase proenzyme 2 (1138 aa).

One can recognise a C2 1 domain in the interval 1–122; it reads MRIIKGRKRG…SNSGLSSHSH (122 aa). Disordered stretches follow at residues 90–166, 269–305, and 413–448; these read TGAP…PGST, MRSSSSLPPPLEDMLSNSSAVSGNEIRREKPYSDTDL, and AVSENDITSVDDEESENQQESDEEFDIYNEDEREDS. Residues 98-121 show a composition bias toward low complexity; that stretch reads SRPRTTTANTSSSTLSNSGLSSHS. A compositionally biased stretch (polar residues) spans 125–135; it reads RNLNVTSKGNQ. Residues 136-166 show a composition bias toward low complexity; sequence TSTSINSVSSSATPAPSHSSSSLSTTGPGST. The segment covering 293-305 has biased composition (basic and acidic residues); it reads EIRREKPYSDTDL. Acidic residues predominate over residues 421-448; it reads SVDDEESENQQESDEEFDIYNEDEREDS. Residues 478–600 enclose the C2 2 domain; sequence RRAKSNFFIS…QQQQHENEWI (123 aa). 3 residues coordinate Ca(2+): Asp571, Ser574, and Asp577. Residues Asp899, His956, and Ser1043 each act as charge relay system; for autoendoproteolytic cleavage activity in the active site. Ser1043 acts as the Schiff-base intermediate with substrate; via pyruvic acid; for decarboxylase activity in catalysis. Ser1043 carries the pyruvic acid (Ser); by autocatalysis modification.

The protein belongs to the phosphatidylserine decarboxylase family. PSD-B subfamily. Eukaryotic type II sub-subfamily. In terms of assembly, heterodimer of a large membrane-associated beta subunit and a small pyruvoyl-containing alpha subunit. Interacts with pstB2/PDR17. This interaction may be a means to structurally tether the donor membrane (ER) harboring PstB2/PDR17 to acceptor membranes (Golgi/endosomes) harboring PSD2 during PtdSer transport to the site of PtdEtn synthesis. Pyruvate serves as cofactor. It depends on Ca(2+) as a cofactor. Post-translationally, is synthesized initially as an inactive proenzyme. Formation of the active enzyme involves a self-maturation process in which the active site pyruvoyl group is generated from an internal serine residue via an autocatalytic post-translational modification. Two non-identical subunits are generated from the proenzyme in this reaction, and the pyruvate is formed at the N-terminus of the alpha chain, which is derived from the carboxyl end of the proenzyme. The autoendoproteolytic cleavage occurs by a canonical serine protease mechanism, in which the side chain hydroxyl group of the serine supplies its oxygen atom to form the C-terminus of the beta chain, while the remainder of the serine residue undergoes an oxidative deamination to produce ammonia and the pyruvoyl prosthetic group on the alpha chain. During this reaction, the Ser that is part of the protease active site of the proenzyme becomes the pyruvoyl prosthetic group, which constitutes an essential element of the active site of the mature decarboxylase.

It localises to the golgi apparatus membrane. The protein resides in the endosome membrane. The enzyme catalyses a 1,2-diacyl-sn-glycero-3-phospho-L-serine + H(+) = a 1,2-diacyl-sn-glycero-3-phosphoethanolamine + CO2. It participates in phospholipid metabolism; phosphatidylethanolamine biosynthesis; phosphatidylethanolamine from CDP-diacylglycerol: step 2/2. Functionally, catalyzes the formation of phosphatidylethanolamine (PtdEtn) from phosphatidylserine (PtdSer). Plays a central role in phospholipid metabolism and in the interorganelle trafficking of phosphatidylserine. Phosphatidylethanolamine produced by PSD2 is insufficient to completely provide the PtdEtn pool required by mitochondria under respiratory conditions. PSD2 is also involved in the PtdSer transport step to the site of PtdEtn synthesis on the Golgi/endosome membranes. Required for normal heavy metal resistance. The protein is Phosphatidylserine decarboxylase proenzyme 2 of Saccharomyces cerevisiae (strain ATCC 204508 / S288c) (Baker's yeast).